The sequence spans 76 residues: Conopeptide X11.1 (76 aa).

Residues 1-20 form the signal peptide; sequence MMKLSVSFLLLLMLLPFITG. Positions 21–39 are excised as a propeptide; the sequence is EENSDSDVLKSGAAVRQGR. Cystine bridges form between Cys-42-Cys-56, Cys-49-Cys-61, Cys-55-Cys-66, and Cys-60-Cys-73.

As to expression, expressed by the venom duct.

Its subcellular location is the secreted. Its function is as follows. Antimicrobial peptide that potently inhibits growth of Mycobacterium tuberculosis (H37Rv strain) (MIC=3 uM). The sequence is that of Conopeptide X11.1 from Conasprella ximenes (Interrupted cone).